We begin with the raw amino-acid sequence, 237 residues long: Ribonuclease PH (237 aa).

Phosphate contacts are provided by residues Arg-86 and 124–126 (GTR).

Belongs to the RNase PH family. Homohexameric ring arranged as a trimer of dimers.

It carries out the reaction tRNA(n+1) + phosphate = tRNA(n) + a ribonucleoside 5'-diphosphate. Phosphorolytic 3'-5' exoribonuclease that plays an important role in tRNA 3'-end maturation. Removes nucleotide residues following the 3'-CCA terminus of tRNAs; can also add nucleotides to the ends of RNA molecules by using nucleoside diphosphates as substrates, but this may not be physiologically important. Probably plays a role in initiation of 16S rRNA degradation (leading to ribosome degradation) during starvation. The polypeptide is Ribonuclease PH (Cereibacter sphaeroides (strain ATCC 17025 / ATH 2.4.3) (Rhodobacter sphaeroides)).